We begin with the raw amino-acid sequence, 185 residues long: HTH-type transcriptional regulator SA2364 (185 aa).

The region spanning 6–66 is the HTH tetR-type domain; it reads KENRQRIEEI…YVIQRDLDIF (61 aa). Residues 29-48 constitute a DNA-binding region (H-T-H motif); it reads SMNRIAKELGIGMGTLYRHF.

The polypeptide is HTH-type transcriptional regulator SA2364 (Staphylococcus aureus (strain N315)).